The sequence spans 193 residues: Auxin-induced protein 22D (193 aa).

Positions 16–68 are disordered; the sequence is ATELRLGLPGSDEPEKRATARSNKRSSPEASDEESISNGSDVTKEDNVVPPAK. The EAR-like (transcriptional repression) signature appears at 19 to 23; the sequence is LRLGL. The region spanning 97–184 is the PB1 domain; sequence GMYVKVSMAG…SCKRLRIMKG (88 aa).

This sequence belongs to the Aux/IAA family. As to quaternary structure, homodimers and heterodimers.

Its subcellular location is the nucleus. Aux/IAA proteins are short-lived transcriptional factors that function as repressors of early auxin response genes at low auxin concentrations. Repression is thought to result from the interaction with auxin response factors (ARFs), proteins that bind to the auxin-responsive promoter element (AuxRE). Formation of heterodimers with ARF proteins may alter their ability to modulate early auxin response genes expression. The sequence is that of Auxin-induced protein 22D (AUX22D) from Vigna radiata var. radiata (Mung bean).